Here is a 548-residue protein sequence, read N- to C-terminus: Sesquiterpene synthase TPS1 (548 aa).

Positions 264, 301, 305, 442, and 445 each coordinate (2E,6E)-farnesyl diphosphate. 2 residues coordinate Mg(2+): D301 and D305. The short motif at 301 to 305 is the DDXXD motif element; it reads DDTYD. Residues D445 and E453 each contribute to the Mg(2+) site.

This sequence belongs to the terpene synthase family. Tpsa subfamily. As to quaternary structure, monomer. Mg(2+) is required as a cofactor. In terms of tissue distribution, expressed in leaves and stems.

The protein localises to the cytoplasm. It catalyses the reaction (2E,6E)-farnesyl diphosphate = germacrene D + diphosphate. It carries out the reaction (2E,6E)-farnesyl diphosphate = (-)-(E)-beta-caryophyllene + diphosphate. The catalysed reaction is (2E,6E)-farnesyl diphosphate = beta-copaene + diphosphate. It functions in the pathway secondary metabolite biosynthesis; terpenoid biosynthesis. Sesquiterpene synthase involved in the biosynthesis of volatile compounds. Mediates the conversion of (2E,6E)-farnesyl diphosphate (FPP) into germacrene D, (-)-(E)-beta-caryophyllene and beta-copaene. The protein is Sesquiterpene synthase TPS1 of Xanthium strumarium (Rough cocklebur).